We begin with the raw amino-acid sequence, 352 residues long: Protein TIFY 6B (352 aa).

Residues Met-1–Ser-71 form a disordered region. Over residues Val-17–Arg-26 the composition is skewed to basic and acidic residues. Positions Met-34–Pro-54 are enriched in polar residues. Residues Pro-172–Asn-207 enclose the Tify domain. Residues Pro-302–Tyr-326 carry the Jas motif. The short motif at Ala-304–Arg-311 is the Nuclear localization signal element.

This sequence belongs to the TIFY/JAZ family. Homo- and heterodimer. Interacts with COI1, MYC2, MYC3, MYC4, TIFY10A/JAZ1, TIFY10B/JAZ2, TIFY6A/JAZ4, TIFY5A/JAZ8, TIFY7/JAZ9, TIFY9/JAZ10 and TIFY3A/JAZ11. Interacts (via TIFY domain) with AFPH2/NINJA. In terms of processing, ubiquitinated. Targeted for degradation by the SCF(COI1) E3 ubiquitin ligase-proteasome pathway during jasmonate signaling. Srtongly expressed in root tips.

The protein localises to the nucleus. Its function is as follows. Repressor of jasmonate responses. Jasmonoyl-isoleucine (JA-Ile) specifically promotes COI1-TIFY6B/JAZ3 interaction. Acts as a negative regulator of MYC2 function. Feed-back regulated by MYC2. This chain is Protein TIFY 6B (TIFY6B), found in Arabidopsis thaliana (Mouse-ear cress).